An 857-amino-acid polypeptide reads, in one-letter code: KH domain-containing protein HEN4 (857 aa).

Residues 1-15 are compositionally biased toward basic and acidic residues; the sequence is MERNSVKFHAEKRSG. A disordered region spans residues 1–27; it reads MERNSVKFHAEKRSGAFDPGSGFGSSK. 4 KH domains span residues 46 to 110, 149 to 217, 451 to 521, and 541 to 610; these read HAAF…KLGA, TVVC…LVSI, DVVF…IMLI, and SITA…IFHI. The tract at residues 644–755 is disordered; sequence SDNPLSIGSH…RGLSDASGGL (112 aa). 2 stretches are compositionally biased toward polar residues: residues 645-665 and 673-688; these read DNPLSIGSHQSVSNPATNSSS and SFLSGSHSSVNYSRSV. The span at 718–730 shows a compositional bias: basic and acidic residues; it reads FTMDHSDNSHHLT. The span at 746 to 755 shows a compositional bias: low complexity; sequence RGLSDASGGL. The KH 5 domain occupies 775 to 839; the sequence is NTTVEIRVPA…DQTQAAQNLL (65 aa).

As to quaternary structure, interacts with HUA1. Interacts with FLK and PEP.

It is found in the nucleus speckle. Its function is as follows. Functions in floral reproductive organ identity in the third whorl and floral determinacy specification by specifically promoting the processing of AGAMOUS (AG) pre-mRNA. Functions in association with HUA1 and HUA2. This chain is KH domain-containing protein HEN4, found in Arabidopsis thaliana (Mouse-ear cress).